Consider the following 207-residue polypeptide: Phosphoribosylglycinamide formyltransferase (207 aa).

Position 13–15 (13–15 (GSN)) interacts with N(1)-(5-phospho-beta-D-ribosyl)glycinamide. Residues 100–103 (MHIL) and asparagine 120 each bind (6R)-10-formyltetrahydrofolate. The active-site Proton donor is histidine 122. Aspartate 162 serves as a coordination point for (6R)-10-formyltetrahydrofolate. Glutamate 191 provides a ligand contact to N(1)-(5-phospho-beta-D-ribosyl)glycinamide.

Belongs to the GART family.

The enzyme catalyses N(1)-(5-phospho-beta-D-ribosyl)glycinamide + (6R)-10-formyltetrahydrofolate = N(2)-formyl-N(1)-(5-phospho-beta-D-ribosyl)glycinamide + (6S)-5,6,7,8-tetrahydrofolate + H(+). Its pathway is purine metabolism; IMP biosynthesis via de novo pathway; N(2)-formyl-N(1)-(5-phospho-D-ribosyl)glycinamide from N(1)-(5-phospho-D-ribosyl)glycinamide (10-formyl THF route): step 1/1. The protein is Phosphoribosylglycinamide formyltransferase (ade5) of Schizosaccharomyces pombe (strain 972 / ATCC 24843) (Fission yeast).